A 247-amino-acid chain; its full sequence is 23S rRNA (guanosine-2'-O-)-methyltransferase RlmB (247 aa).

3 residues coordinate S-adenosyl-L-methionine: glycine 197, isoleucine 217, and leucine 226.

It belongs to the class IV-like SAM-binding methyltransferase superfamily. RNA methyltransferase TrmH family. RlmB subfamily.

The protein localises to the cytoplasm. The enzyme catalyses guanosine(2251) in 23S rRNA + S-adenosyl-L-methionine = 2'-O-methylguanosine(2251) in 23S rRNA + S-adenosyl-L-homocysteine + H(+). In terms of biological role, specifically methylates the ribose of guanosine 2251 in 23S rRNA. In Burkholderia sp, this protein is 23S rRNA (guanosine-2'-O-)-methyltransferase RlmB.